The sequence spans 65 residues: Large ribosomal subunit protein bL35 (65 aa).

The interval 1–29 (MPKMKTNRGAAKRFKKTGSGRIKRGKAFT) is disordered. Over residues 10–26 (AAKRFKKTGSGRIKRGK) the composition is skewed to basic residues.

This sequence belongs to the bacterial ribosomal protein bL35 family.

The protein is Large ribosomal subunit protein bL35 of Desulfotalea psychrophila (strain LSv54 / DSM 12343).